A 242-amino-acid chain; its full sequence is Alpha-aspartyl dipeptidase (242 aa).

Residues serine 125, aspartate 140, and histidine 162 each act as charge relay system in the active site.

This sequence belongs to the peptidase S51 family.

It is found in the cytoplasm. The enzyme catalyses Dipeptidase E catalyzes the hydrolysis of dipeptides Asp-|-Xaa. It does not act on peptides with N-terminal Glu, Asn or Gln, nor does it cleave isoaspartyl peptides.. Its function is as follows. Hydrolyzes dipeptides containing N-terminal aspartate residues. The chain is Alpha-aspartyl dipeptidase (aad-a) from Xenopus laevis (African clawed frog).